The chain runs to 123 residues: MPKKSGSASGRNLRIADQIQRDLAELIQREIKNPAMGLVTLQSVSLTPDYAHAKIYFTVLGAEPDAAAAILNEKAGYLHSLLFKRLHIHTVPTLHFHYDGSVERGIEMSRLIDQANASRAKDD.

The protein belongs to the RbfA family. As to quaternary structure, monomer. Binds 30S ribosomal subunits, but not 50S ribosomal subunits or 70S ribosomes.

It localises to the cytoplasm. Its function is as follows. One of several proteins that assist in the late maturation steps of the functional core of the 30S ribosomal subunit. Associates with free 30S ribosomal subunits (but not with 30S subunits that are part of 70S ribosomes or polysomes). Required for efficient processing of 16S rRNA. May interact with the 5'-terminal helix region of 16S rRNA. This is Ribosome-binding factor A from Ralstonia nicotianae (strain ATCC BAA-1114 / GMI1000) (Ralstonia solanacearum).